The sequence spans 469 residues: Transcription factor phomD (469 aa).

The segment at residues Cys14 to Cys41 is a DNA-binding region (zn(2)-C6 fungal-type). The interval Thr49–Ala118 is disordered. Residues Lys82–Met93 show a composition bias toward polar residues. A compositionally biased stretch (low complexity) spans Gln104–Ala118.

Its subcellular location is the nucleus. Its function is as follows. Transcription factor; part of the gene cluster that mediates the biosynthesis of the phomopsins, a group of hexapeptide mycotoxins which infects lupins and causes lupinosis disease in livestock. May play a role in the regulation of the production of phomopsins. This Diaporthe leptostromiformis (Lupinosis disease fungus) protein is Transcription factor phomD.